The chain runs to 333 residues: 4-hydroxyproline 2-epimerase (333 aa).

Cysteine 90 serves as the catalytic Proton acceptor. Residues glycine 91–histidine 92, histidine 223, and aspartate 249 each bind substrate. Cysteine 253 functions as the Proton donor in the catalytic mechanism. Glycine 254–threonine 255 contacts substrate.

Belongs to the proline racemase family.

It carries out the reaction trans-4-hydroxy-L-proline = cis-4-hydroxy-D-proline. Functionally, catalyzes the epimerization of trans-4-hydroxy-L-proline (t4LHyp) to cis-4-hydroxy-D-proline (c4DHyp). May be involved in a degradation pathway of t4LHyp, which would allow S.novella to grow on t4LHyp as a sole carbon source. This chain is 4-hydroxyproline 2-epimerase, found in Ancylobacter novellus (strain ATCC 8093 / DSM 506 / JCM 20403 / CCM 1077 / IAM 12100 / NBRC 12443 / NCIMB 10456) (Starkeya novella).